The following is a 250-amino-acid chain: 1-(5-phosphoribosyl)-5-[(5-phosphoribosylamino)methylideneamino] imidazole-4-carboxamide isomerase (250 aa).

Aspartate 8 serves as the catalytic Proton acceptor. Catalysis depends on aspartate 131, which acts as the Proton donor.

The protein belongs to the HisA/HisF family.

Its subcellular location is the cytoplasm. The enzyme catalyses 1-(5-phospho-beta-D-ribosyl)-5-[(5-phospho-beta-D-ribosylamino)methylideneamino]imidazole-4-carboxamide = 5-[(5-phospho-1-deoxy-D-ribulos-1-ylimino)methylamino]-1-(5-phospho-beta-D-ribosyl)imidazole-4-carboxamide. Its pathway is amino-acid biosynthesis; L-histidine biosynthesis; L-histidine from 5-phospho-alpha-D-ribose 1-diphosphate: step 4/9. The sequence is that of 1-(5-phosphoribosyl)-5-[(5-phosphoribosylamino)methylideneamino] imidazole-4-carboxamide isomerase from Paraburkholderia phymatum (strain DSM 17167 / CIP 108236 / LMG 21445 / STM815) (Burkholderia phymatum).